Here is a 166-residue protein sequence, read N- to C-terminus: Nucleotide-binding protein Acid_3194 (166 aa).

It belongs to the YajQ family.

Its function is as follows. Nucleotide-binding protein. This chain is Nucleotide-binding protein Acid_3194, found in Solibacter usitatus (strain Ellin6076).